The chain runs to 431 residues: Probable indole-3-pyruvate monooxygenase YUCCA7 (431 aa).

Position 36–41 (36–41 (GAGPSG)) interacts with FAD. Position 207-212 (207-212 (GCGNSG)) interacts with NADP(+).

This sequence belongs to the FMO family. Requires FAD as cofactor. As to expression, expressed in shoot apex regions and siliques, and at high levels in roots. Detected in flowers, stems and leaves.

It carries out the reaction indole-3-pyruvate + NADPH + O2 + H(+) = (indol-3-yl)acetate + CO2 + NADP(+) + H2O. It functions in the pathway plant hormone metabolism; auxin biosynthesis. Functionally, involved in auxin biosynthesis. Belongs to the set of redundant YUCCA genes probably responsible for auxin biosynthesis in roots. This chain is Probable indole-3-pyruvate monooxygenase YUCCA7 (YUC7), found in Arabidopsis thaliana (Mouse-ear cress).